The primary structure comprises 191 residues: Heme-binding protein 1 (191 aa).

This sequence belongs to the HEBP family. In terms of assembly, monomer.

Its subcellular location is the cytoplasm. In terms of biological role, may bind free porphyrinogens that may be present in the cell and thus facilitate removal of these potentially toxic compound. Binds with a high affinity to one molecule of heme or porphyrins. It binds metalloporphyrins, free porphyrins and N-methylprotoporphyrin with similar affinities. This chain is Heme-binding protein 1 (HEBP1), found in Bos taurus (Bovine).